A 926-amino-acid polypeptide reads, in one-letter code: MYDAYTPCEVALRLPVEVTCLAFQESNQTLLAGGRAGHLYAYTISANRRGFELTNICKSFHKKAVMELKVCQREDLLLCVSDGQLMAHKLSDPEYKVETLIHKVKPVQTFARFSPKTSGDLYVIVSSRKKLYLFKWGEKDGHKEFIEVALDYNPVFLDTPTSIRCVGEMVFFSVRNEYFSMTMQKDKTTTSPSEGSTPEGWNGFVTRLLNFNCQPGIVPMIDRRRVAFVRNEIVVTTDIWGQRPANVLSDEYKFSEVPMQIVYDSPYLVGMLSKGRVEVRSIFDGQLVQTMSLPKAMTLCSGARGQVFVAALSDIWILDTSQNLRKNVSHLIQERHFELAIQLAENSNLFAEEQKLEIKKKAALNLFNQKKFDESFALFGEIKTDISEVLSIIRMFPELLPDGFQSMTGVVSDMPANDRMRALLALGSYLSEIRTEHAKHIELYNRLYSSGAAKKTDEDEKAKLLLTLRVVDTTLLKCYIKTKPMLVDSLIRLQSNACTFEDAKKILESEGRLRSLFILYETRKKHEMALDLFIDQSSRPDADPFFDDAIQQIVEYLQSLGNSNLPLILKYAKWVLAKNLEAGVQIFTSDETEMARNLNRKAVVEFLKSECPDALIPYLEHVIFKWEEPSSYFHETLLEFYVARVNTLFKDYVHAFPDAFSDENITRAGDEDGELGLYRKRLLKFLEVSHSYSPQTVLLQLAPHAFYEERALILGRLKQHEQALAIYVNTLKNVPAAEEYCRLYYNAHDETNSQVYLMLFRTLVHPNQQQLHSIPYHADSTPFGSYRDDVSEASTLVNSTSSYQPDVNTAIKILAKHADKIDTVGALNMLPATTPLRVVFSAINAVIQTTGRQASTRKMEKSVSQCAMSKKLERKNKAQSTKIIVNFSSECVVCEKKIAVSAFVRYPDGRLAHLYCHNDSQGGNRN.

The CNH domain maps to Pro15–Gln306. The stretch at Asp590 to Gln768 is one CHCR repeat.

Belongs to the VAM6/VPS39 family. In terms of assembly, probable core component of the homotypic fusion and vacuole protein sorting (HOPS) complex consisting of the core class C Vps proteins vps-11, vps-16, vps-18, and which further associates with vps-33.1, vps-39 and vps-41. May interact with lgg-2. Interacts with cuti-1.

The protein resides in the cytoplasm. The protein localises to the lysosome membrane. It is found in the late endosome membrane. It localises to the late endosome. Its subcellular location is the lysosome. In terms of biological role, plays a role in vesicle-mediated protein trafficking to lysosomal compartments including the endocytic membrane transport and autophagic pathways. Believed to act in part as a component of the putative HOPS endosomal tethering complex which is proposed to be involved in the rab-5-to-rab-7 endosome conversion probably implicating sand-1, and via binding SNAREs and SNARE complexes to mediate tethering and docking events during SNARE-mediated membrane fusion. The HOPS complex is proposed to be recruited to rab-7 on the late endosomal membrane and to regulate late endocytic, phagocytic and autophagic traffic towards lysosomes. Involved in homotypic vesicle fusions between late endosomes and in heterotypic fusions between late endosomes and lysosomes. Required for fusion of endosomes. In association with lgg-2 mediates the tethering of autophagosomes with lysosomes to form autolysosomes. Within the HOPS complex, contributes to the normal development of gut granules in embryonic and adult intestinal cells. The sequence is that of Vacuolar protein sorting-associated protein 39 homolog from Caenorhabditis elegans.